The primary structure comprises 152 residues: Nascent polypeptide-associated complex subunit beta (152 aa).

2 disordered regions span residues 19–39 (IGKGTPRRKVKRAPARSAGDD) and 125–152 (NMQKNEKDAEEDDIPDLVAGENFESKVE). Residues 23 to 32 (TPRRKVKRAP) are compositionally biased toward basic residues. One can recognise an NAC-A/B domain in the interval 36–101 (AGDDKKLQAT…GEDKELTELV (66 aa)).

The protein belongs to the NAC-beta family. In terms of assembly, part of the nascent polypeptide-associated complex (NAC), consisting of npc-1/egd2 and npc-2/egd1. NAC associates with ribosomes via npc-2/egd1.

Its subcellular location is the cytoplasm. The protein localises to the nucleus. Its function is as follows. Component of the nascent polypeptide-associated complex (NAC), a dynamic component of the ribosomal exit tunnel, protecting the emerging polypeptides from interaction with other cytoplasmic proteins to ensure appropriate nascent protein targeting. The NAC complex also promotes mitochondrial protein import by enhancing productive ribosome interactions with the outer mitochondrial membrane and blocks the inappropriate interaction of ribosomes translating non-secretory nascent polypeptides with translocation sites in the membrane of the endoplasmic reticulum. Npc-2/egd1 may act as a transcription factor that exert a negative effect on the expression of several genes that are transcribed by RNA polymerase II. In Neurospora crassa (strain ATCC 24698 / 74-OR23-1A / CBS 708.71 / DSM 1257 / FGSC 987), this protein is Nascent polypeptide-associated complex subunit beta (npc-2).